The chain runs to 131 residues: Profilin-5 (131 aa).

This sequence belongs to the profilin family. In terms of assembly, occurs in many kinds of cells as a complex with monomeric actin in a 1:1 ratio.

The protein resides in the cytoplasm. It is found in the cytoskeleton. Its function is as follows. Binds to actin and affects the structure of the cytoskeleton. At high concentrations, profilin prevents the polymerization of actin, whereas it enhances it at low concentrations. By binding to PIP2, it inhibits the formation of IP3 and DG. The protein is Profilin-5 of Hevea brasiliensis (Para rubber tree).